Reading from the N-terminus, the 133-residue chain is Small ribosomal subunit protein uS19 (133 aa).

It belongs to the universal ribosomal protein uS19 family.

Protein S19 forms a complex with S13 that binds strongly to the 16S ribosomal RNA. This is Small ribosomal subunit protein uS19 (rps19) from Archaeoglobus fulgidus (strain ATCC 49558 / DSM 4304 / JCM 9628 / NBRC 100126 / VC-16).